The sequence spans 330 residues: Electron transfer flavoprotein subunit alpha (330 aa).

270–298 lines the FAD pocket; that stretch reads LYIACGISGAIQHLAGMSNSGTIVAINKN.

The protein belongs to the ETF alpha-subunit/FixB family. As to quaternary structure, heterodimer of an alpha and a beta subunit. FAD is required as a cofactor.

Functionally, the electron transfer flavoprotein serves as a specific electron acceptor for other dehydrogenases. It transfers the electrons to the main respiratory chain via ETF-ubiquinone oxidoreductase (ETF dehydrogenase). The polypeptide is Electron transfer flavoprotein subunit alpha (etfA) (Thermoanaerobacterium thermosaccharolyticum (strain ATCC 7956 / DSM 571 / NCIMB 9385 / NCA 3814 / NCTC 13789 / WDCM 00135 / 2032) (Clostridium thermosaccharolyticum)).